Consider the following 95-residue polypeptide: Co-chaperonin GroES (95 aa).

Residues 12-22 (VKPSPAEEKTK) are compositionally biased toward basic and acidic residues. Positions 12–38 (VKPSPAEEKTKGGLYIPDSGKEKPQHG) are disordered.

This sequence belongs to the GroES chaperonin family. In terms of assembly, heptamer of 7 subunits arranged in a ring. Interacts with the chaperonin GroEL.

It localises to the cytoplasm. In terms of biological role, together with the chaperonin GroEL, plays an essential role in assisting protein folding. The GroEL-GroES system forms a nano-cage that allows encapsulation of the non-native substrate proteins and provides a physical environment optimized to promote and accelerate protein folding. GroES binds to the apical surface of the GroEL ring, thereby capping the opening of the GroEL channel. The chain is Co-chaperonin GroES from Chloroherpeton thalassium (strain ATCC 35110 / GB-78).